A 211-amino-acid chain; its full sequence is Guanylate kinase (211 aa).

The 181-residue stretch at G7–R187 folds into the Guanylate kinase-like domain. Residue G14–A21 participates in ATP binding.

Belongs to the guanylate kinase family.

It localises to the cytoplasm. The enzyme catalyses GMP + ATP = GDP + ADP. Functionally, essential for recycling GMP and indirectly, cGMP. This is Guanylate kinase from Aster yellows witches'-broom phytoplasma (strain AYWB).